The primary structure comprises 313 residues: Methionyl-tRNA formyltransferase (313 aa).

111 to 114 (SLLP) contacts (6S)-5,6,7,8-tetrahydrofolate.

Belongs to the Fmt family.

It catalyses the reaction L-methionyl-tRNA(fMet) + (6R)-10-formyltetrahydrofolate = N-formyl-L-methionyl-tRNA(fMet) + (6S)-5,6,7,8-tetrahydrofolate + H(+). Its function is as follows. Attaches a formyl group to the free amino group of methionyl-tRNA(fMet). The formyl group appears to play a dual role in the initiator identity of N-formylmethionyl-tRNA by promoting its recognition by IF2 and preventing the misappropriation of this tRNA by the elongation apparatus. In Mesoplasma florum (strain ATCC 33453 / NBRC 100688 / NCTC 11704 / L1) (Acholeplasma florum), this protein is Methionyl-tRNA formyltransferase.